Consider the following 340-residue polypeptide: UDP-3-O-(3-hydroxymyristoyl)glucosamine N-acyltransferase (340 aa).

Histidine 239 functions as the Proton acceptor in the catalytic mechanism.

It belongs to the transferase hexapeptide repeat family. LpxD subfamily. In terms of assembly, homotrimer.

It carries out the reaction a UDP-3-O-[(3R)-3-hydroxyacyl]-alpha-D-glucosamine + a (3R)-hydroxyacyl-[ACP] = a UDP-2-N,3-O-bis[(3R)-3-hydroxyacyl]-alpha-D-glucosamine + holo-[ACP] + H(+). It catalyses the reaction UDP-3-O-[(3R)-3-hydroxytetradecanoyl]-alpha-D-glucosamine + (3R)-hydroxytetradecanoyl-[ACP] = UDP-2-N,3-O-bis[(3R)-3-hydroxytetradecanoyl]-alpha-D-glucosamine + holo-[ACP] + H(+). The protein operates within glycolipid biosynthesis; lipid IV(A) biosynthesis; lipid IV(A) from (3R)-3-hydroxytetradecanoyl-[acyl-carrier-protein] and UDP-N-acetyl-alpha-D-glucosamine: step 3/6. Its function is as follows. Catalyzes the N-acylation of UDP-3-O-(hydroxytetradecanoyl)glucosamine using 3-hydroxytetradecanoyl-ACP as the acyl donor. Is involved in the biosynthesis of lipid A, a phosphorylated glycolipid that anchors the lipopolysaccharide to the outer membrane of the cell. This Yersinia pestis bv. Antiqua (strain Antiqua) protein is UDP-3-O-(3-hydroxymyristoyl)glucosamine N-acyltransferase.